We begin with the raw amino-acid sequence, 330 residues long: DNA-directed RNA polymerase I subunit RPA43 (330 aa).

Residues 251 to 330 form a disordered region; sequence ADVTDVTPQE…ANFESPKKRQ (80 aa). 3 positions are modified to phosphoserine: Ser306, Ser318, and Ser325. The span at 317 to 330 shows a compositional bias: basic and acidic residues; the sequence is HSEEANFESPKKRQ.

This sequence belongs to the eukaryotic RPA43 RNA polymerase subunit family. In terms of assembly, component of the RNA polymerase I (Pol I) complex consisting of 13 subunits: a ten-subunit catalytic core composed of POLR1A/RPA1, POLR1B/RPA2, POLR1C/RPAC1, POLR1D/RPAC2, POLR1H/RPA12, POLR2E/RPABC1, POLR2F/RPABC2, POLR2H/RPABC3, POLR2K/RPABC4 and POLR2L/RPABC5; a mobile stalk subunit POLR1F/RPA43 protruding from the core and additional subunits homologous to general transcription factors POLR1E/RPA49 and POLR1G/RPA34. Interacts with RRN3/TIF-IA. Interacts with RRN3/TIF-IA. In terms of tissue distribution, widely expressed.

It localises to the nucleus. Its subcellular location is the nucleolus. Its function is as follows. Component of RNA polymerase I (Pol I), a DNA-dependent RNA polymerase which synthesizes ribosomal RNA precursors using the four ribonucleoside triphosphates as substrates. Through its association with RRN3/TIF-IA may be involved in recruitment of Pol I to rDNA promoters. This Mus musculus (Mouse) protein is DNA-directed RNA polymerase I subunit RPA43.